The chain runs to 336 residues: tRNA (guanine(37)-N(1))-methyltransferase Trm5b (336 aa).

S-adenosyl-L-methionine is bound by residues arginine 186, 223-224 (DI), 251-252 (DV), and asparagine 265.

Belongs to the class I-like SAM-binding methyltransferase superfamily. TRM5/TYW2 family. Monomer.

Its subcellular location is the cytoplasm. It carries out the reaction guanosine(37) in tRNA + S-adenosyl-L-methionine = N(1)-methylguanosine(37) in tRNA + S-adenosyl-L-homocysteine + H(+). In terms of biological role, specifically methylates the N1 position of guanosine-37 in various tRNAs. The chain is tRNA (guanine(37)-N(1))-methyltransferase Trm5b (trm5b) from Methanocaldococcus jannaschii (strain ATCC 43067 / DSM 2661 / JAL-1 / JCM 10045 / NBRC 100440) (Methanococcus jannaschii).